A 258-amino-acid polypeptide reads, in one-letter code: Putative L-lactate dehydrogenase operon regulatory protein (258 aa).

Residues 6–74 enclose the HTH gntR-type domain; it reads RRLSDEVADR…RGGGTFIRWR (69 aa). The H-T-H motif DNA-binding region spans 34-53; the sequence is ERQLAMQLGVSRNSLREALA.

Its function is as follows. May be a regulatory protein for the LCT genes. The chain is Putative L-lactate dehydrogenase operon regulatory protein (lldR) from Escherichia coli (strain K12).